A 555-amino-acid polypeptide reads, in one-letter code: Formate--tetrahydrofolate ligase (555 aa).

64-71 (TKAGIGKT) is an ATP binding site.

The protein belongs to the formate--tetrahydrofolate ligase family.

The catalysed reaction is (6S)-5,6,7,8-tetrahydrofolate + formate + ATP = (6R)-10-formyltetrahydrofolate + ADP + phosphate. It participates in one-carbon metabolism; tetrahydrofolate interconversion. This chain is Formate--tetrahydrofolate ligase, found in Bacteroides fragilis (strain ATCC 25285 / DSM 2151 / CCUG 4856 / JCM 11019 / LMG 10263 / NCTC 9343 / Onslow / VPI 2553 / EN-2).